The primary structure comprises 549 residues: Arginine--tRNA ligase (549 aa).

The 'HIGH' region motif lies at 132 to 142; the sequence is ANPTGPLHLAH.

Belongs to the class-I aminoacyl-tRNA synthetase family. As to quaternary structure, monomer.

It localises to the cytoplasm. The enzyme catalyses tRNA(Arg) + L-arginine + ATP = L-arginyl-tRNA(Arg) + AMP + diphosphate. The protein is Arginine--tRNA ligase of Renibacterium salmoninarum (strain ATCC 33209 / DSM 20767 / JCM 11484 / NBRC 15589 / NCIMB 2235).